Here is a 369-residue protein sequence, read N- to C-terminus: Ubiquinone biosynthesis protein COQ4, mitochondrial (369 aa).

A mitochondrion-targeting transit peptide spans 1–28 (MTSILGSARPLIQVGPKSRNASTSMSRL). The tract at residues 1–70 (MTSILGSARP…NPTNASRHPR (70 aa)) is disordered. 2 stretches are compositionally biased toward polar residues: residues 19-33 (RNASTSMSRLPSFPT) and 47-66 (YATISPTAPRSSQRNPTNAS). 4 residues coordinate Zn(2+): H198, D199, H202, and E214. Residues 330-369 (FSGRAKKGGKRRGWPSKILEHQKAQHQQQQQQQKVDESRN) form a disordered region. Positions 332–343 (GRAKKGGKRRGW) are enriched in basic residues.

Belongs to the COQ4 family. In terms of assembly, component of a multi-subunit COQ enzyme complex, composed of at least COQ3, COQ4, COQ5, COQ6, COQ7 and COQ9. Zn(2+) is required as a cofactor.

The protein localises to the mitochondrion inner membrane. It carries out the reaction a 4-hydroxy-3-methoxy-5-(all-trans-polyprenyl)benzoate + H(+) = a 2-methoxy-6-(all-trans-polyprenyl)phenol + CO2. It participates in cofactor biosynthesis; ubiquinone biosynthesis. Its function is as follows. Lyase that catalyzes the C1-decarboxylation of 4-hydroxy-3-methoxy-5-(all-trans-polyprenyl)benzoic acid into 2-methoxy-6-(all-trans-polyprenyl)phenol during ubiquinone biosynthesis. The protein is Ubiquinone biosynthesis protein COQ4, mitochondrial of Mycosarcoma maydis (Corn smut fungus).